Consider the following 216-residue polypeptide: Uracil phosphoribosyltransferase (216 aa).

Residues Arg-84, Arg-109, and 137–145 (DPMLATGNT) each bind 5-phospho-alpha-D-ribose 1-diphosphate. Uracil-binding positions include Ile-202 and 207-209 (GDA). Asp-208 provides a ligand contact to 5-phospho-alpha-D-ribose 1-diphosphate.

It belongs to the UPRTase family. Mg(2+) serves as cofactor.

It catalyses the reaction UMP + diphosphate = 5-phospho-alpha-D-ribose 1-diphosphate + uracil. It participates in pyrimidine metabolism; UMP biosynthesis via salvage pathway; UMP from uracil: step 1/1. Allosterically activated by GTP. Its function is as follows. Catalyzes the conversion of uracil and 5-phospho-alpha-D-ribose 1-diphosphate (PRPP) to UMP and diphosphate. This Synechocystis sp. (strain ATCC 27184 / PCC 6803 / Kazusa) protein is Uracil phosphoribosyltransferase.